Here is a 693-residue protein sequence, read N- to C-terminus: Elongation factor G (693 aa).

Residues 6–286 (KYTRNIGIAA…AICRYLPSPI (281 aa)) form the tr-type G domain. GTP-binding positions include 15–22 (AHIDAGKT), 83–87 (DTPGH), and 137–140 (NKMD).

It belongs to the TRAFAC class translation factor GTPase superfamily. Classic translation factor GTPase family. EF-G/EF-2 subfamily.

It is found in the cytoplasm. Its function is as follows. Catalyzes the GTP-dependent ribosomal translocation step during translation elongation. During this step, the ribosome changes from the pre-translocational (PRE) to the post-translocational (POST) state as the newly formed A-site-bound peptidyl-tRNA and P-site-bound deacylated tRNA move to the P and E sites, respectively. Catalyzes the coordinated movement of the two tRNA molecules, the mRNA and conformational changes in the ribosome. This Karelsulcia muelleri (strain GWSS) (Sulcia muelleri) protein is Elongation factor G.